The sequence spans 144 residues: Large ribosomal subunit protein uL15 (144 aa).

The segment at 1–49 (MIKLECLQDPSPRKRRTKLLGRGPSSGHGKTSSRGHKGDCSRSGYKRRF) is disordered.

The protein belongs to the universal ribosomal protein uL15 family. In terms of assembly, part of the 50S ribosomal subunit.

Binds to the 23S rRNA. The chain is Large ribosomal subunit protein uL15 from Chlamydia trachomatis serovar A (strain ATCC VR-571B / DSM 19440 / HAR-13).